The primary structure comprises 106 residues: BLOC-1-related complex subunit 7 (106 aa).

The protein belongs to the BORCS7 family. In terms of assembly, component of the BLOC-one-related complex (BORC) which is composed of BLOC1S1, BLOC1S2, BORCS5, BORCS6, BORCS7, BORCS8, KXD1 and SNAPIN.

Its subcellular location is the lysosome membrane. Functionally, as part of the BORC complex may play a role in lysosomes movement and localization at the cell periphery. Associated with the cytosolic face of lysosomes, the BORC complex may recruit ARL8B and couple lysosomes to microtubule plus-end-directed kinesin motor. The protein is BLOC-1-related complex subunit 7 of Pongo abelii (Sumatran orangutan).